The primary structure comprises 145 residues: Actin-related protein 4A (145 aa).

Residues 47–66 (IDDAANTTEDAKESDKEKGK) form a disordered region. The span at 55-64 (EDAKESDKEK) shows a compositional bias: basic and acidic residues.

Belongs to the actin family. ARP4 subfamily. Expressed in roots, leaves and flowers.

The chain is Actin-related protein 4A (ARP4A) from Arabidopsis thaliana (Mouse-ear cress).